The sequence spans 109 residues: Transcription initiation factor IIA subunit 2 (109 aa).

It belongs to the TFIIA subunit 2 family. TFIIA is a heterodimer composed of the large toa1 and the small toa2 subunits.

Its subcellular location is the nucleus. The protein localises to the cytoplasm. In terms of biological role, TFIIA is a component of the transcription machinery of RNA polymerase II and plays an important role in transcriptional activation. TFIIA in a complex with tbp mediates transcriptional activity. The protein is Transcription initiation factor IIA subunit 2 (toa2) of Schizosaccharomyces pombe (strain 972 / ATCC 24843) (Fission yeast).